We begin with the raw amino-acid sequence, 4306 residues long: Cytoplasmic dynein 2 heavy chain 1 (4306 aa).

A stem region spans residues 1-1650 (MAGSLSDVRK…YVQMVDSELQ (1650 aa)). An ATP-binding site is contributed by 145–152 (LGVVLRKS). A coiled-coil region spans residues 669-696 (KELEGYIQKLQNAAERLATENRRLRKWH). AAA stretches follow at residues 1651–1875 (YTYE…VLRG), 1941–2161 (SALK…KQND), 2249–2505 (LTAD…WVLG), and 2617–2862 (HYGR…ESCK). ATP is bound by residues 1689–1696 (GPAGTGKT), 1979–1986 (GPSGAGKS), 2291–2298 (GPEGCGKG), and 2655–2662 (GRSGVGRR). The tract at residues 2880-3168 (AISSSKRKEL…AEVSKAQETI (289 aa)) is stalk. Coiled-coil stretches lie at residues 2896–2981 (LQAG…KEVQ), 3108–3199 (LETE…LATL), and 3407–3441 (IQHEKPDLEEQKTKLLQQEEDKKIQLARLEESLLE). AAA stretches follow at residues 3243–3472 (LCTE…LIQD) and 3689–3904 (MALF…VIDR).

Belongs to the dynein heavy chain family. The cytoplasmic dynein complex 2 is probably composed by a heavy chain DYNC2H1 homodimer and a number of DYNC2LI1 light intermediate chains. Widely expressed both in ciliated and unciliated tissues. Detected in brain and testis (at protein level).

Its subcellular location is the cytoplasm. It localises to the cytoskeleton. The protein resides in the cilium axoneme. It is found in the cell membrane. In terms of biological role, may function as a motor for intraflagellar retrograde transport. Functions in cilia biogenesis. May play a role in transport between endoplasmic reticulum and Golgi or organization of the Golgi in cells. The polypeptide is Cytoplasmic dynein 2 heavy chain 1 (Dync2h1) (Rattus norvegicus (Rat)).